Consider the following 175-residue polypeptide: Succinate dehydrogenase assembly factor 2, mitochondrial (175 aa).

A disordered region spans residues Pro42–Thr71. Positions Ala51–Glu60 are enriched in polar residues.

The protein belongs to the SDHAF2 family. As to quaternary structure, interacts with the flavoprotein subunit within the SDH catalytic dimer.

The protein localises to the mitochondrion matrix. Its function is as follows. Plays an essential role in the assembly of succinate dehydrogenase (SDH), an enzyme complex (also referred to as respiratory complex II) that is a component of both the tricarboxylic acid (TCA) cycle and the mitochondrial electron transport chain, and which couples the oxidation of succinate to fumarate with the reduction of ubiquinone (coenzyme Q) to ubiquinol. Required for flavinylation (covalent attachment of FAD) of the flavoprotein subunit of the SDH catalytic dimer. This chain is Succinate dehydrogenase assembly factor 2, mitochondrial, found in Cryptococcus neoformans var. neoformans serotype D (strain B-3501A) (Filobasidiella neoformans).